The chain runs to 372 residues: Flagellar P-ring protein (372 aa).

Positions 1 to 26 are cleaved as a signal peptide; that stretch reads MNLSSLPFRLLAAAVALCAIAAPASA.

It belongs to the FlgI family. As to quaternary structure, the basal body constitutes a major portion of the flagellar organelle and consists of four rings (L,P,S, and M) mounted on a central rod.

Its subcellular location is the periplasm. It is found in the bacterial flagellum basal body. In terms of biological role, assembles around the rod to form the L-ring and probably protects the motor/basal body from shearing forces during rotation. The protein is Flagellar P-ring protein of Xanthomonas campestris pv. campestris (strain B100).